The following is a 716-amino-acid chain: Leucine-rich repeat neuronal protein 1 (716 aa).

The first 25 residues, 1 to 25 (MARMSFVIAACQLVLGLLMTSLTES), serve as a signal peptide directing secretion. The region spanning 26–72 (SIQNSECPQLCVCEIRPWFTPQSTYREATTVDCNDLRLTRIPSNLSS) is the LRRNT domain. The Extracellular portion of the chain corresponds to 26-631 (SIQNSECPQL…DISDQETSTA (606 aa)). LRR repeat units lie at residues 73–95 (DTQV…QQLF), 96–117 (NLTE…GLAN), 120–141 (QLTT…CLQD), 144–165 (NLQE…AFAG), 168–189 (NLLR…WFDS), 192–213 (NLEI…NFKP), 216–237 (NLRS…ALVG), 240–261 (SLES…ALQK), 264–285 (NLKF…DFKN), 313–335 (ELTK…AFRS), and 338–359 (ALES…TVES). 2 N-linked (GlcNAc...) asparagine glycosylation sites follow: Asn96 and Asn117. The LRRCT domain occupies 371–424 (NPLRCDCVIHWINSNKTNIRFMEPLSMFCAMPPEYKGHQVKEVLIQDSSEQCLP). The N-linked (GlcNAc...) asparagine glycan is linked to Asn385. Positions 424–515 (PMISHDSFPN…GADTRVATIK (92 aa)) constitute an Ig-like C2-type domain. Cys447 and Cys499 are disulfide-bonded. N-linked (GlcNAc...) asparagine glycosylation is present at Asn517. The 93-residue stretch at 525 to 617 (QVLKIYVKQT…SCVNVTTKNA (93 aa)) folds into the Fibronectin type-III domain. A helical transmembrane segment spans residues 632–652 (LAAVMGSMFAVISLASIAVYF). At 653 to 716 (AKRFKRKNYH…VDTSRSYYMW (64 aa)) the chain is on the cytoplasmic side. The segment covering 691-700 (DSEKDKDGSA) has biased composition (basic and acidic residues). The tract at residues 691–716 (DSEKDKDGSADTKPTQVDTSRSYYMW) is disordered. Over residues 702–716 (TKPTQVDTSRSYYMW) the composition is skewed to polar residues.

It is found in the membrane. The polypeptide is Leucine-rich repeat neuronal protein 1 (LRRN1) (Homo sapiens (Human)).